Consider the following 616-residue polypeptide: MVGQLSEGAIAAIMQKGDTNIKPILQVINIRPITTGNSPPRYRLLMSDGLNTLSSFMSATQLNPLVEQEQLSSNCVCQINRFIVNTLKDGRRVVILMELEVLKSAEVVGVKIGNPVPYNEGLGQPQVAPPAPAASPAASSRPQPQNGTSGAGSTVSKAYGASKTFGKAAGPSLSHNSGGTQSKVVPIASLTPYQSKWTICARVTNKSQIRTWSNSRGEEKLFSLELVDESGEIRATAFNEQVDKFFPLIEVNKVYYFSKGTLKIANKQFTAVKNDYEMTFNNETSVMPCEDDHHLPTVQFDFTGIDDLENKSKDSLVDIIGICKSYEDATKITVRSNNREVAKRNIYLMDTSGKVVTATLWGEDADKFDGSRQPVLAIKGARVSDFGGRSLSVLSSSTIIANPDIPEAYKLRGWFDAEGQALDGVSISDLKSGGVGGGNTNWKTLYEVKSENLGQGDKPDYFSSVATVVYLRKENCMYQACPTQDCNKKVIDQQNGLYRCEKCDTEFPNFKYRMILSVNIADFQENQWVTCFQESAEAILGQNAAYLGELKDKNEQAFEEVFQNANFRSFIFRVRVKVETYNDESRIKATVMDVKPVDYREYGRRLVMSIRRSALM.

Met1 is modified (N-acetylmethionine). Residues Lys22 and Lys88 each participate in a glycyl lysine isopeptide (Lys-Gly) (interchain with G-Cter in ubiquitin) cross-link. Residues 121-155 are disordered; it reads GLGQPQVAPPAPAASPAASSRPQPQNGTSGAGSTV. The segment covering 134 to 145 has biased composition (low complexity); that stretch reads ASPAASSRPQPQ. Residues 146–155 show a composition bias toward polar residues; that stretch reads NGTSGAGSTV. Lys163 and Lys167 each carry N6-acetyllysine; alternate. Residues Lys163 and Lys167 each participate in a glycyl lysine isopeptide (Lys-Gly) (interchain with G-Cter in ubiquitin); alternate cross-link. Thr180 carries the phosphothreonine modification. Residue Lys183 forms a Glycyl lysine isopeptide (Lys-Gly) (interchain with G-Cter in ubiquitin) linkage. The residue at position 191 (Thr191) is a Phosphothreonine. The segment at residues 197 to 281 is a DNA-binding region (OB); that stretch reads WTICARVTNK…VKNDYEMTFN (85 aa). Glycyl lysine isopeptide (Lys-Gly) (interchain with G-Cter in ubiquitin) cross-links involve residues Lys220 and Lys244. Lys259 bears the N6-acetyllysine; alternate mark. Residue Lys259 forms a Glycyl lysine isopeptide (Lys-Gly) (interchain with G-Cter in ubiquitin); alternate linkage. Glycyl lysine isopeptide (Lys-Gly) (interchain with G-Cter in ubiquitin) cross-links involve residues Lys267 and Lys331. A Phosphoserine modification is found at Ser384. Glycyl lysine isopeptide (Lys-Gly) (interchain with G-Cter in ubiquitin) cross-links involve residues Lys410 and Lys431. Lys449 is covalently cross-linked (Glycyl lysine isopeptide (Lys-Gly) (interchain with G-Cter in SUMO)). Lys458 participates in a covalent cross-link: Glycyl lysine isopeptide (Lys-Gly) (interchain with G-Cter in ubiquitin). A C4-type zinc finger spans residues 481-503; it reads CPTQDCNKKVIDQQNGLYRCEKC. A Glycyl lysine isopeptide (Lys-Gly) (interchain with G-Cter in ubiquitin) cross-link involves residue Lys553. Lys577 is covalently cross-linked (Glycyl lysine isopeptide (Lys-Gly) (interchain with G-Cter in SUMO)).

This sequence belongs to the replication factor A protein 1 family. Component of the canonical replication protein A complex (RPA), a heterotrimer composed of RPA1, RPA2 and RPA3. The DNA-binding activity may reside exclusively on the RPA1 subunit. Interacts with PRPF19; the PRP19-CDC5L complex is recruited to the sites of DNA repair where it ubiquitinates the replication protein A complex (RPA). Interacts with RIPK1. Interacts with the polymerase alpha subunit POLA1/p180; this interaction stabilizes the replicative complex and reduces the misincorporation rate of DNA polymerase alpha by acting as a fidelity clamp. Interacts with RAD51 and SENP6 to regulate DNA repair. Interacts with HELB; this interaction promotes HELB recruitment to chromatin following DNA damage. Interacts with PRIMPOL; leading to recruit PRIMPOL on chromatin and stimulate its DNA primase activity. Interacts with XPA; the interaction is direct and associates XPA with the RPA complex. Interacts with ETAA1; the interaction is direct and promotes ETAA1 recruitment at stalled replication forks. Interacts with RPA1; this interaction associates HROB with the RPA complex. Interacts (when poly-ADP-ribosylated) with HTATSF1. In terms of processing, DNA damage-induced 'Lys-63'-linked polyubiquitination by PRPF19 mediates ATRIP recruitment to the RPA complex at sites of DNA damage and activation of ATR. Ubiquitinated by RFWD3 at stalled replication forks in response to DNA damage: ubiquitination by RFWD3 does not lead to degradation by the proteasome and promotes removal of the RPA complex from stalled replication forks, promoting homologous recombination. Sumoylated on lysine residues Lys-449 and Lys-577, with Lys-449 being the major site. Sumoylation promotes recruitment of RAD51 to the DNA damage foci to initiate DNA repair through homologous recombination. Desumoylated by SENP6. Post-translationally, poly-ADP-ribosylated by PARP1; promoting recruitment of HTATSF1.

It is found in the nucleus. Its subcellular location is the PML body. In terms of biological role, as part of the heterotrimeric replication protein A complex (RPA/RP-A), binds and stabilizes single-stranded DNA intermediates, that form during DNA replication or upon DNA stress. It prevents their reannealing and in parallel, recruits and activates different proteins and complexes involved in DNA metabolism. Thereby, it plays an essential role both in DNA replication and the cellular response to DNA damage. In the cellular response to DNA damage, the RPA complex controls DNA repair and DNA damage checkpoint activation. Through recruitment of ATRIP activates the ATR kinase a master regulator of the DNA damage response. It is required for the recruitment of the DNA double-strand break repair factors RAD51 and RAD52 to chromatin in response to DNA damage. Also recruits to sites of DNA damage proteins like XPA and XPG that are involved in nucleotide excision repair and is required for this mechanism of DNA repair. Also plays a role in base excision repair (BER) probably through interaction with UNG. Also recruits SMARCAL1/HARP, which is involved in replication fork restart, to sites of DNA damage. May also play a role in telomere maintenance. This chain is Replication protein A 70 kDa DNA-binding subunit (RPA1), found in Pongo abelii (Sumatran orangutan).